Consider the following 292-residue polypeptide: Release factor glutamine methyltransferase (292 aa).

S-adenosyl-L-methionine is bound by residues 126–130 (GTGTG), Asp157, Trp184, and Asn198. Residue 198–201 (NPPY) participates in substrate binding.

Belongs to the protein N5-glutamine methyltransferase family. PrmC subfamily.

It catalyses the reaction L-glutaminyl-[peptide chain release factor] + S-adenosyl-L-methionine = N(5)-methyl-L-glutaminyl-[peptide chain release factor] + S-adenosyl-L-homocysteine + H(+). Its function is as follows. Methylates the class 1 translation termination release factors RF1/PrfA and RF2/PrfB on the glutamine residue of the universally conserved GGQ motif. This chain is Release factor glutamine methyltransferase, found in Haemophilus influenzae (strain ATCC 51907 / DSM 11121 / KW20 / Rd).